Here is a 1777-residue protein sequence, read N- to C-terminus: Non-reducing polyketide synthase nscA (1777 aa).

The N-terminal acylcarrier protein transacylase domain (SAT) stretch occupies residues 27–261 (DLFRRLDQHS…PLPVYDGLCH (235 aa)). The Ketosynthase family 3 (KS3) domain maps to 396–829 (SSKLAIVGMA…GGNTTLLLED (434 aa)). Active-site for beta-ketoacyl synthase activity residues include Cys-569, His-704, and His-747. The interval 934 to 1212 (AFTGQGAYYH…SAIPSCRRNE (279 aa)) is malonyl-CoA:ACP transacylase (MAT) domain. The segment at 1297-1616 (TSLVHQITAE…RLLMDRFFSP (320 aa)) is product template (PT) domain. The tract at residues 1301–1437 (HQITAETVEA…ATIRFEDPEA (137 aa)) is N-terminal hotdog fold. Positions 1301–1611 (HQITAETVEA…FRRVPRLLMD (311 aa)) constitute a PKS/mFAS DH domain. Catalysis depends on His-1333, which acts as the Proton acceptor; for dehydratase activity. Positions 1465–1611 (ASRLSKPLAY…FRRVPRLLMD (147 aa)) are C-terminal hotdog fold. Asp-1522 acts as the Proton donor; for dehydratase activity in catalysis. A disordered region spans residues 1674 to 1704 (LLATSSKSSTPKESPIVTPAESERAEPVDNS). A compositionally biased stretch (low complexity) spans 1677-1688 (TSSKSSTPKESP). The 78-residue stretch at 1700 to 1777 (PVDNSMTSQC…EMTAWIEEYC (78 aa)) folds into the Carrier domain. O-(pantetheine 4'-phosphoryl)serine is present on Ser-1737.

The cofactor is pantetheine 4'-phosphate.

The protein operates within secondary metabolite biosynthesis. Its function is as follows. Non-reducing polyketide synthase; part of the gene cluster that mediates the biosynthesis of neosartoricin B, a prenylated anthracenone that probably exhibits T-cell antiproliferative activity, suggestive of a physiological role as an immunosuppressive agent. The non-reducing polyketide synthase nscA probably synthesizes and cyclizes the decaketide backbone. The hydrolase nscB then mediates the product release through hydrolysis followed by spontaneous decarboxylation. The prenyltransferase nscD catalyzes the addition of the dimethylallyl group to the aromatic C5. The FAD-dependent monooxygenase nscC is then responsible for the stereospecific hydroxylation at C2. Neosartoricin B can be converted into two additional compounds neosartoricins C and D. Neosartoricin C is a spirocyclic compound that is cyclized through the attack of C3 hydroxyl on C14, followed by dehydration. On the other hand, neosartoricin D is a further cyclized compound in which attack of C2 on C14 in neosartoricin C results in the formation of the acetal-containing dioxabicyclo-octanone ring. Both of these compounds are novel and possibly represent related metabolites of the gene cluster. The polypeptide is Non-reducing polyketide synthase nscA (Trichophyton equinum (strain ATCC MYA-4606 / CBS 127.97) (Horse ringworm fungus)).